Reading from the N-terminus, the 274-residue chain is 2,3,4,5-tetrahydropyridine-2,6-dicarboxylate N-succinyltransferase (274 aa).

It belongs to the transferase hexapeptide repeat family.

It is found in the cytoplasm. It catalyses the reaction (S)-2,3,4,5-tetrahydrodipicolinate + succinyl-CoA + H2O = (S)-2-succinylamino-6-oxoheptanedioate + CoA. It participates in amino-acid biosynthesis; L-lysine biosynthesis via DAP pathway; LL-2,6-diaminopimelate from (S)-tetrahydrodipicolinate (succinylase route): step 1/3. This Salmonella agona (strain SL483) protein is 2,3,4,5-tetrahydropyridine-2,6-dicarboxylate N-succinyltransferase.